We begin with the raw amino-acid sequence, 206 residues long: Large ribosomal subunit protein uL13z (206 aa).

It belongs to the universal ribosomal protein uL13 family.

The sequence is that of Large ribosomal subunit protein uL13z (RPL13AA) from Arabidopsis thaliana (Mouse-ear cress).